A 219-amino-acid polypeptide reads, in one-letter code: Thiopurine S-methyltransferase (219 aa).

Residues W10, L45, E66, and R123 each coordinate S-adenosyl-L-methionine.

It belongs to the class I-like SAM-binding methyltransferase superfamily. TPMT family.

It localises to the cytoplasm. The enzyme catalyses S-adenosyl-L-methionine + a thiopurine = S-adenosyl-L-homocysteine + a thiopurine S-methylether.. The chain is Thiopurine S-methyltransferase from Bordetella petrii (strain ATCC BAA-461 / DSM 12804 / CCUG 43448).